The following is a 212-amino-acid chain: Histone H1.2 (212 aa).

The span at 1–17 (MSEAAPAAPAAAPPAEK) shows a compositional bias: low complexity. The segment at 1–41 (MSEAAPAAPAAAPPAEKAPAKKKAAKKPAGVRRKASGPPVS) is disordered. Position 2 is an N-acetylserine (Ser2). Ser2 carries the phosphoserine modification. Position 17 is an N6-acetyllysine (Lys17). The segment covering 20 to 35 (AKKKAAKKPAGVRRKA) has biased composition (basic residues). Residues Lys23, Lys26, and Lys27 each carry the N6-(2-hydroxyisobutyryl)lysine modification. Position 34 is an N6-(beta-hydroxybutyryl)lysine; alternate (Lys34). Lys34 is modified (N6-crotonyllysine; alternate). Residue Lys34 is modified to N6-methyllysine; alternate. The H15 domain occupies 36–109 (SGPPVSELIT…GASGSFKLNK (74 aa)). An N6-(2-hydroxyisobutyryl)lysine modification is found at Lys46. The residue at position 52 (Lys52) is an N6-(beta-hydroxybutyryl)lysine; alternate. Lys52 bears the N6-(2-hydroxyisobutyryl)lysine; alternate mark. Arg54 bears the Citrulline mark. Lys63 bears the N6-(2-hydroxyisobutyryl)lysine mark. An N6-(beta-hydroxybutyryl)lysine; alternate modification is found at Lys64. Lys64 bears the N6-crotonyllysine; alternate mark. The residue at position 64 (Lys64) is an N6-(2-hydroxyisobutyryl)lysine; alternate. 2 positions are modified to N6-(2-hydroxyisobutyryl)lysine: Lys75 and Lys81. N6-(beta-hydroxybutyryl)lysine; alternate is present on residues Lys85 and Lys90. 3 positions are modified to N6-crotonyllysine; alternate: Lys85, Lys90, and Lys97. An N6-(2-hydroxyisobutyryl)lysine; alternate mark is found at Lys85, Lys90, and Lys97. Residue Lys97 is modified to N6-succinyllysine; alternate. Positions 98–212 (GTGASGSFKL…KAKKVAAKKK (115 aa)) are disordered. At Ser104 the chain carries Phosphoserine; by PKC. N6-(beta-hydroxybutyryl)lysine is present on Lys106. Residues Lys110, Lys117, Lys121, Lys129, and Lys136 each carry the N6-(2-hydroxyisobutyryl)lysine modification. Positions 121–148 (KKAGAAKAKKPAGAAKKPKKATGAATPK) are enriched in low complexity. Thr146 carries the post-translational modification Phosphothreonine. The residue at position 148 (Lys148) is an N6-(2-hydroxyisobutyryl)lysine. Residues 149 to 160 (KAAKKTPKKAKK) are compositionally biased toward basic residues. Lys159 and Lys168 each carry N6-crotonyllysine; alternate. 2 positions are modified to N6-(2-hydroxyisobutyryl)lysine; alternate: Lys159 and Lys168. Over residues 169 to 212 (KVAKSPKKAKVTKPKKVKSASKAVKPKAAKPKVAKAKKVAAKKK) the composition is skewed to basic residues. Lys186 carries the post-translational modification N6-methyllysine; by EHMT1 and EHMT2. Ser187 bears the ADP-ribosylserine mark. An N6-(2-hydroxyisobutyryl)lysine modification is found at Lys212.

This sequence belongs to the histone H1/H5 family. As to quaternary structure, interacts with TSC22D1 isoform 2. H1 histones are progressively phosphorylated during the cell cycle, becoming maximally phosphorylated during late G2 phase and M phase, and being dephosphorylated sharply thereafter. Post-translationally, crotonylation (Kcr) is specifically present in male germ cells and marks testis-specific genes in post-meiotic cells, including X-linked genes that escape sex chromosome inactivation in haploid cells. Crotonylation marks active promoters and enhancers and confers resistance to transcriptional repressors. It is also associated with post-meiotically activated genes on autosomes. In terms of processing, ADP-ribosylated on Ser-187 in response to DNA damage. Citrullination at Arg-54 (H1R54ci) by PADI4 takes place within the DNA-binding site of H1 and results in its displacement from chromatin and global chromatin decondensation, thereby promoting pluripotency and stem cell maintenance. Post-translationally, hydroxybutyrylation of histones is induced by starvation.

It localises to the nucleus. The protein localises to the chromosome. In terms of biological role, histone H1 protein binds to linker DNA between nucleosomes forming the macromolecular structure known as the chromatin fiber. Histones H1 are necessary for the condensation of nucleosome chains into higher-order structured fibers. Also acts as a regulator of individual gene transcription through chromatin remodeling, nucleosome spacing and DNA methylation. In Mus musculus (Mouse), this protein is Histone H1.2.